The primary structure comprises 301 residues: Acetyl-coenzyme A carboxylase carboxyl transferase subunit beta (301 aa).

Residues 25–294 (LWIKDPSTGE…NSDAPAPQKP (270 aa)) form the CoA carboxyltransferase N-terminal domain.

Belongs to the AccD/PCCB family. In terms of assembly, acetyl-CoA carboxylase is a heterohexamer composed of biotin carboxyl carrier protein (AccB), biotin carboxylase (AccC) and two subunits each of ACCase subunit alpha (AccA) and ACCase subunit beta (AccD).

Its subcellular location is the cytoplasm. It catalyses the reaction N(6)-carboxybiotinyl-L-lysyl-[protein] + acetyl-CoA = N(6)-biotinyl-L-lysyl-[protein] + malonyl-CoA. The protein operates within lipid metabolism; malonyl-CoA biosynthesis; malonyl-CoA from acetyl-CoA: step 1/1. Component of the acetyl coenzyme A carboxylase (ACC) complex. Biotin carboxylase (BC) catalyzes the carboxylation of biotin on its carrier protein (BCCP) and then the CO(2) group is transferred by the transcarboxylase to acetyl-CoA to form malonyl-CoA. This Brucella canis (strain ATCC 23365 / NCTC 10854 / RM-666) protein is Acetyl-coenzyme A carboxylase carboxyl transferase subunit beta.